The primary structure comprises 501 residues: Splicing factor 3A subunit 3 (501 aa).

Residue methionine 1 is modified to N-acetylmethionine. Phosphoserine is present on residues serine 54 and serine 121. Residues 175-179 carry the Nuclear localization signal motif; that stretch reads KERKN. Serine 295 and serine 299 each carry phosphoserine. The span at 343-354 shows a compositional bias: basic and acidic residues; it reads ENVQRKQARTGE. The interval 343-374 is disordered; sequence ENVQRKQARTGEEREEEEEEQISESESEDEEN. The segment covering 355 to 374 has biased composition (acidic residues); sequence EREEEEEEQISESESEDEEN. Phosphoserine is present on residues serine 365, serine 367, and serine 369. The Matrin-type zinc finger occupies 406 to 437; sequence YNCEICGNYTYRGPKAFQRHFAEWRHAHGMRC. Position 475 is a phosphothreonine (threonine 475).

The protein belongs to the SF3A3 family. In terms of assembly, component of the 17S U2 SnRNP complex, a ribonucleoprotein complex that contains small nuclear RNA (snRNA) U2 and a number of specific proteins. Part of the SF3A subcomplex of the 17S U2 SnRNP complex which is composed of three subunits; SF3A3/SAP61, SF3A2/SAP62 and SF3A1/SAP114. SF3A associates with the splicing factor SF3B and a 12S RNA unit to form the mature 17S U2 small nuclear ribonucleoprotein complex (17S U2 snRNP). Identified in the spliceosome 'E' complex, a precursor of the spliceosome 'A' complex. Identified in the spliceosome 'A' and 'B' complexes. Identified in the spliceosome 'C' complex. Ubiquitous.

The protein localises to the nucleus speckle. It is found in the nucleus. Its function is as follows. Component of the 17S U2 SnRNP complex of the spliceosome, a large ribonucleoprotein complex that removes introns from transcribed pre-mRNAs. The 17S U2 SnRNP complex (1) directly participates in early spliceosome assembly and (2) mediates recognition of the intron branch site during pre-mRNA splicing by promoting the selection of the pre-mRNA branch-site adenosine, the nucleophile for the first step of splicing. Within the 17S U2 SnRNP complex, SF3A3 is part of the SF3A subcomplex that contributes to the assembly of the 17S U2 snRNP, and the subsequent assembly of the pre-spliceosome 'E' complex and the pre-catalytic spliceosome 'A' complex. Involved in pre-mRNA splicing as a component of pre-catalytic spliceosome 'B' complexes. This is Splicing factor 3A subunit 3 (SF3A3) from Homo sapiens (Human).